Reading from the N-terminus, the 68-residue chain is Cell division protein ZapB (68 aa).

Positions 3 to 58 (LELLSKLETKIQAALETIELLKMELEEEKQKNHTLNEQNQQLSQDLTSWNEKVTGL) form a coiled coil.

This sequence belongs to the ZapB family. As to quaternary structure, homodimer. The ends of the coiled-coil dimer bind to each other, forming polymers. Interacts with FtsZ.

It is found in the cytoplasm. Functionally, non-essential, abundant cell division factor that is required for proper Z-ring formation. It is recruited early to the divisome by direct interaction with FtsZ, stimulating Z-ring assembly and thereby promoting cell division earlier in the cell cycle. Its recruitment to the Z-ring requires functional FtsA or ZipA. In Shewanella loihica (strain ATCC BAA-1088 / PV-4), this protein is Cell division protein ZapB.